Consider the following 408-residue polypeptide: Phosphoglycerate kinase (408 aa).

Substrate is bound by residues 24 to 26, Arg-39, 62 to 65, Arg-121, and Arg-161; these read DLN and HLGR. ATP is bound by residues Lys-211, Gly-307, Glu-338, and 364-367; that span reads GGDS.

This sequence belongs to the phosphoglycerate kinase family. Monomer.

The protein localises to the cytoplasm. The catalysed reaction is (2R)-3-phosphoglycerate + ATP = (2R)-3-phospho-glyceroyl phosphate + ADP. It participates in carbohydrate degradation; glycolysis; pyruvate from D-glyceraldehyde 3-phosphate: step 2/5. The protein is Phosphoglycerate kinase of Paenarthrobacter aurescens (strain TC1).